The following is a 195-amino-acid chain: L-rhamnose-binding lectin CSL2 (195 aa).

2 consecutive SUEL-type lectin domains span residues 1-97 (TRVV…YTCL) and 104-195 (TCEG…YTCG).

L-rhamnose binding lectin. Has hemagglutinating activity towards rabbit erythrocytes and human type B erythrocytes. Hemagglutinating activity is inhibited by smooth-type lipopolysaccharide (LPS) from S.flexneri 1A and E.coli K12, but not by rough-type LPS from S.flexneri, E.coli K12 and E.coli EH100. Agglutinates E.coli K12 and B.subtilis. The protein is L-rhamnose-binding lectin CSL2 of Oncorhynchus keta (Chum salmon).